The primary structure comprises 199 residues: Inner membrane-spanning protein YciB (199 aa).

The next 5 helical transmembrane spans lie at 3–23 (LLID…WGIY), 47–67 (VEPM…ATLL), 76–96 (WKPS…QLVF), 119–139 (LNWS…VIAY), and 149–169 (FKLF…AIYM). A disordered region spans residues 180 to 199 (AAAATPDALPPPGVQQDKQP).

The protein belongs to the YciB family.

The protein localises to the cell inner membrane. Functionally, plays a role in cell envelope biogenesis, maintenance of cell envelope integrity and membrane homeostasis. This Delftia acidovorans (strain DSM 14801 / SPH-1) protein is Inner membrane-spanning protein YciB.